The chain runs to 447 residues: Tubulin beta chain (447 aa).

The GTP site is built by Gln-11, Glu-69, Ser-138, Gly-142, Thr-143, Gly-144, Asn-204, and Asn-226. Glu-69 provides a ligand contact to Mg(2+).

The protein belongs to the tubulin family. As to quaternary structure, dimer of alpha and beta chains. A typical microtubule is a hollow water-filled tube with an outer diameter of 25 nm and an inner diameter of 15 nM. Alpha-beta heterodimers associate head-to-tail to form protofilaments running lengthwise along the microtubule wall with the beta-tubulin subunit facing the microtubule plus end conferring a structural polarity. Microtubules usually have 13 protofilaments but different protofilament numbers can be found in some organisms and specialized cells. The cofactor is Mg(2+).

The protein localises to the cytoplasm. It localises to the cytoskeleton. Functionally, tubulin is the major constituent of microtubules, a cylinder consisting of laterally associated linear protofilaments composed of alpha- and beta-tubulin heterodimers. Microtubules grow by the addition of GTP-tubulin dimers to the microtubule end, where a stabilizing cap forms. Below the cap, tubulin dimers are in GDP-bound state, owing to GTPase activity of alpha-tubulin. This Penicillium digitatum (Green mold) protein is Tubulin beta chain (TUB2).